We begin with the raw amino-acid sequence, 684 residues long: MNNIFAYKEIESPIDDQICKDYKTKYANPSIPIIIDNGSYQCRAGFANDISPKLIFRSLVGKVKSTSSPIVGNSLKEGDISRLTIKSPFDSNLLVHPPSQESIFDYIFHKFGIENEIENPVLITEPTSNPTFCRKYMSELLFECYNIKSVVYGIDSLFSFYGQRDQFKDGGKNSLIIGSSFNTTHIYNVQNYNVSHQQTKRINIGGGASTDYLRKLIHLKYPKHKSYFTQNYTNKIKEEHCYVSQGQYIEELKEFENDQLAKEKSVIIQLPYQEIDFEKLEEERQRKIQNRKDLGAKLRELADKKRLEKKTELEDKLASLESILALKTTNVEEFQQTLKSKSYATEKDLIRDIDDLKDKLFGKKKESEQVEDTEEFPLLFIADSELNADQLKEKKKQRQLKSMKDGRLAQKRKRDEEKEKEKEKEEERDRQEEESFLKDPEHYLKDLHSRKSKILEKREARQKQKQKANIVQRNSRLRTIVNPTNHGNYGEKGEEVEDPEEAEESREMAILDKLLNKFDPTSISSAIVSHDDQFPIGEYHTAEDFQVSLGVERIKCPETLFQPKAIIGVDQMGLVEAIISSILSQLPVDTRKLVTENIFLTGGNVNTKHFKDRIHYEIQQIREPYSPLTILKSKDSQLDAWLGARKWCLDNQDNWSNVSISKQDYQEKGYDYIKSHFASNLSLN.

Residues 262–469 (KEKSVIIQLP…ARQKQKQKAN (208 aa)) are a coiled coil. Disordered stretches follow at residues 392 to 443 (KEKK…PEHY) and 481 to 500 (VNPT…EDPE). Residues 402-443 (SMKDGRLAQKRKRDEEKEKEKEKEEERDRQEEESFLKDPEHY) show a composition bias toward basic and acidic residues.

Belongs to the actin family. ARP5 subfamily. Component of the chromatin-remodeling Ino80 complex.

The protein resides in the nucleus. Functionally, proposed core component of the chromatin remodeling Ino80 complex which is involved in transcriptional regulation, DNA replication and probably DNA repair. The sequence is that of Actin-related protein 5 (arpE) from Dictyostelium discoideum (Social amoeba).